Consider the following 536-residue polypeptide: Enterobactin synthase component E (536 aa).

Asn235, Ser240, Gly309, Val331, Ala335, Asp415, and Lys432 together coordinate substrate. Residues 438–439 are phosphopantetheine binding; that stretch reads GG. Lys441 contacts substrate.

The protein belongs to the ATP-dependent AMP-binding enzyme family. EntE subfamily. In terms of assembly, proteins EntB, EntD, EntE, and EntF form a multienzyme complex called enterobactin synthase. Monomer. EntA and EntE interact together.

The protein resides in the membrane. The catalysed reaction is 3 2,3-dihydroxybenzoate + 3 L-serine + 6 ATP = enterobactin + 6 AMP + 6 diphosphate + 4 H(+). It catalyses the reaction 2,3-dihydroxybenzoate + holo-[ACP] + ATP = 2,3-dihydroxybenzoyl-[ACP] + AMP + diphosphate. It carries out the reaction 2,3-dihydroxybenzoyl-5'-AMP + holo-[ACP] = 2,3-dihydroxybenzoyl-[ACP] + AMP + H(+). The protein operates within siderophore biosynthesis; enterobactin biosynthesis. Inhibited by the adenylate analogs, 5'-O-[N-(salicyl)sulfamoyl]adenosine (Sal-AMS) and 5'-O-[N-(2,3-dihydroxybenzoyl)sulfamoyl]adenosine (DHB-AMS). Adenylation of 2,3-dihydroxybenzoate (DHB) is enhanced by a protein-protein interaction between the EntA and EntE. Functionally, involved in the biosynthesis of the siderophore enterobactin (enterochelin), which is a macrocyclic trimeric lactone of N-(2,3-dihydroxybenzoyl)-serine. The serine trilactone serves as a scaffolding for the three catechol functionalities that provide hexadentate coordination for the tightly ligated iron(2+) atoms. EntE processes via a two-step adenylation-ligation reaction (bi-uni-uni-bi ping-pong mechanism). First, it catalyzes the activation of the carboxylate group of 2,3-dihydroxy-benzoate (DHB), via a reversible ATP-dependent pyrophosphate exchange reactions to yield the acyladenylate intermediate 2,3-dihydroxybenzoyl-AMP. It can also transfer AMP to salicylate, 2,4-dihydroxybenzoate, gentisate and 2,3,4-trihydroxybenzoate. In the second step, DHB is transferred from 2,3-dihydroxybenzoyl-AMP onto the phosphopantetheinylated EntB (holo-EntB) to form DHB-holo-EntB. Then this product will serve in the formation of the amide bond between 2,3-dihydroxybenzoate (DHB) and L-serine. It can also transfer adenylated salicylate to holo-EntB. In Escherichia coli (strain K12), this protein is Enterobactin synthase component E.